We begin with the raw amino-acid sequence, 117 residues long: Large ribosomal subunit protein bL20 (117 aa).

This sequence belongs to the bacterial ribosomal protein bL20 family.

Functionally, binds directly to 23S ribosomal RNA and is necessary for the in vitro assembly process of the 50S ribosomal subunit. It is not involved in the protein synthesizing functions of that subunit. The protein is Large ribosomal subunit protein bL20 of Geotalea uraniireducens (strain Rf4) (Geobacter uraniireducens).